The chain runs to 359 residues: Uroporphyrinogen decarboxylase (359 aa).

Residues 36–40 (RQAGR), D85, Y160, S215, and H338 contribute to the substrate site.

This sequence belongs to the uroporphyrinogen decarboxylase family. As to quaternary structure, homodimer.

The protein resides in the cytoplasm. It catalyses the reaction uroporphyrinogen III + 4 H(+) = coproporphyrinogen III + 4 CO2. It participates in porphyrin-containing compound metabolism; protoporphyrin-IX biosynthesis; coproporphyrinogen-III from 5-aminolevulinate: step 4/4. Functionally, catalyzes the decarboxylation of four acetate groups of uroporphyrinogen-III to yield coproporphyrinogen-III. This chain is Uroporphyrinogen decarboxylase, found in Corynebacterium efficiens (strain DSM 44549 / YS-314 / AJ 12310 / JCM 11189 / NBRC 100395).